A 473-amino-acid chain; its full sequence is Anthocyanidin 5,3-O-glucosyltransferase (473 aa).

It belongs to the UDP-glycosyltransferase family.

It functions in the pathway pigment biosynthesis; anthocyanin biosynthesis. Sequentially catalyzes two glycosylation steps at the 5-OH and 3-OH positions of anthocyanidin. Unglycosylated anthocyanidin or anthocyanidin 5-O-glucoside, but not anthocyanidin 3-O-glucoside, can be used as glucosyl acceptor. The protein is Anthocyanidin 5,3-O-glucosyltransferase (RhGT1) of Rosa hybrid cultivar.